Consider the following 154-residue polypeptide: Large ribosomal subunit protein uL30 (154 aa).

It belongs to the universal ribosomal protein uL30 family. Part of the 50S ribosomal subunit.

This chain is Large ribosomal subunit protein uL30, found in Methanococcus vannielii.